A 180-amino-acid chain; its full sequence is Large ribosomal subunit protein uL6 (180 aa).

Belongs to the universal ribosomal protein uL6 family. In terms of assembly, part of the 50S ribosomal subunit.

Its function is as follows. This protein binds to the 23S rRNA, and is important in its secondary structure. It is located near the subunit interface in the base of the L7/L12 stalk, and near the tRNA binding site of the peptidyltransferase center. The chain is Large ribosomal subunit protein uL6 from Clostridium botulinum (strain 657 / Type Ba4).